The sequence spans 860 residues: Pentatricopeptide repeat-containing protein At1g18900 (860 aa).

8 PPR repeats span residues 363–397, 398–432, 433–467, 468–502, 503–537, 538–572, 573–607, and 608–642; these read DGHTYTTMVGNLGRAKQFGAINKLLDEMVRDGCQP, NTVTYNRLIHSYGRANYLNEAMNVFNQMQEAGCKP, DRVTYCTLIDIHAKAGFLDIAMDMYQRMQAGGLSP, DTFTYSVIINCLGKAGHLPAAHKLFCEMVDQGCTP, NLVTYNIMMDLHAKARNYQNALKLYRDMQNAGFEP, DKVTYSIVMEVLGHCGYLEEAEAVFTEMQQKNWIP, DEPVYGLLVDLWGKAGNVEKAWQWYQAMLHAGLRP, and NVPTCNSLLSTFLRVNKIAEAYELLQNMLALGLRP. The Smr domain occupies 760 to 843; the sequence is INLHVMSEGT…NSGCFVGSGE (84 aa).

This sequence belongs to the PPR family. P subfamily.

The chain is Pentatricopeptide repeat-containing protein At1g18900 from Arabidopsis thaliana (Mouse-ear cress).